The chain runs to 410 residues: Multifunctional CCA protein (410 aa).

Residues glycine 8 and arginine 11 each coordinate ATP. The CTP site is built by glycine 8 and arginine 11. Mg(2+) is bound by residues aspartate 21 and aspartate 23. 3 residues coordinate ATP: arginine 91, arginine 143, and arginine 146. CTP is bound by residues arginine 91, arginine 143, and arginine 146. Residues threonine 232–isoleucine 333 enclose the HD domain.

The protein belongs to the tRNA nucleotidyltransferase/poly(A) polymerase family. Bacterial CCA-adding enzyme type 1 subfamily. Monomer. Can also form homodimers and oligomers. Mg(2+) serves as cofactor. The cofactor is Ni(2+).

The enzyme catalyses a tRNA precursor + 2 CTP + ATP = a tRNA with a 3' CCA end + 3 diphosphate. The catalysed reaction is a tRNA with a 3' CCA end + 2 CTP + ATP = a tRNA with a 3' CCACCA end + 3 diphosphate. In terms of biological role, catalyzes the addition and repair of the essential 3'-terminal CCA sequence in tRNAs without using a nucleic acid template. Adds these three nucleotides in the order of C, C, and A to the tRNA nucleotide-73, using CTP and ATP as substrates and producing inorganic pyrophosphate. tRNA 3'-terminal CCA addition is required both for tRNA processing and repair. Also involved in tRNA surveillance by mediating tandem CCA addition to generate a CCACCA at the 3' terminus of unstable tRNAs. While stable tRNAs receive only 3'-terminal CCA, unstable tRNAs are marked with CCACCA and rapidly degraded. The sequence is that of Multifunctional CCA protein from Paraburkholderia phytofirmans (strain DSM 17436 / LMG 22146 / PsJN) (Burkholderia phytofirmans).